Reading from the N-terminus, the 152-residue chain is Deoxyuridine 5'-triphosphate nucleotidohydrolase (152 aa).

Residues 71–73 (RSG), Asn84, 88–90 (LID), and Met98 contribute to the substrate site.

This sequence belongs to the dUTPase family. Mg(2+) serves as cofactor.

It catalyses the reaction dUTP + H2O = dUMP + diphosphate + H(+). Its pathway is pyrimidine metabolism; dUMP biosynthesis; dUMP from dCTP (dUTP route): step 2/2. Functionally, this enzyme is involved in nucleotide metabolism: it produces dUMP, the immediate precursor of thymidine nucleotides and it decreases the intracellular concentration of dUTP so that uracil cannot be incorporated into DNA. The chain is Deoxyuridine 5'-triphosphate nucleotidohydrolase from Photorhabdus laumondii subsp. laumondii (strain DSM 15139 / CIP 105565 / TT01) (Photorhabdus luminescens subsp. laumondii).